Here is a 583-residue protein sequence, read N- to C-terminus: Protein disulfide-isomerase-like protein of the testis (583 aa).

A signal peptide spans 1-17 (MDLLWMPLLLVAARISA). N-linked (GlcNAc...) asparagine glycans are attached at residues Asn58, Asn128, Asn160, and Asn340. In terms of domain architecture, Thioredoxin spans 388–451 (LVKQLVGKNF…IAKIDITAND (64 aa)). Basic and acidic residues-rich tracts occupy residues 522–531 (EVPMMKKELP) and 540–559 (NVTK…KTSE). Residues 522-583 (EVPMMKKELP…KKKPKVKEEL (62 aa)) are disordered. An N-linked (GlcNAc...) asparagine glycan is attached at Asn540. Residues 573 to 583 (QKKKPKVKEEL) are compositionally biased toward basic residues. Positions 580–583 (KEEL) match the Prevents secretion from ER motif.

It belongs to the protein disulfide isomerase family. As to quaternary structure, homodimer. The homodimer is not disulfide-linked. Interacts with ERO1A and CLGN. N-glycosylated.

It localises to the endoplasmic reticulum. In terms of biological role, probable redox-inactive chaperone involved in spermatogenesis. The polypeptide is Protein disulfide-isomerase-like protein of the testis (PDILT) (Macaca fascicularis (Crab-eating macaque)).